The primary structure comprises 96 residues: MLRLDLQFFASKKGVGSTKNGRDSIAKRLGAKRADGQFVTGGSILYRQRGTKIHPGLNVGRGGDDTLYAKIDGIVRFERLGRDRKRVSVYPVSKEA.

A propeptide spanning residues 1 to 9 (MLRLDLQFF) is cleaved from the precursor.

This sequence belongs to the bacterial ribosomal protein bL27 family. The N-terminus is cleaved by ribosomal processing cysteine protease Prp.

The protein is Large ribosomal subunit protein bL27 of Geobacillus sp. (strain WCH70).